The following is a 773-amino-acid chain: Acyl-homoserine lactone acylase PvdQ (773 aa).

The first 23 residues, 1–23, serve as a signal peptide directing secretion; that stretch reads MSRALPGFLFAGLSVAVVLPAQA. Positions 200-221 are cleaved as a propeptide — spacer peptide; sequence SQQVQALQLAAARNERFALERG. The active-site Nucleophile is the Ser-222.

The protein belongs to the peptidase S45 family. Heterodimer of an alpha subunit and a beta subunit processed from the same precursor.

It localises to the periplasm. The enzyme catalyses an N-acyl-L-homoserine lactone + H2O = L-homoserine lactone + a carboxylate. In terms of biological role, catalyzes the deacylation of acyl-homoserine lactone (AHL or acyl-HSL), releasing homoserine lactone (HSL) and the corresponding fatty acid. Possesses a specificity for the degradation of long-chain acyl-HSLs (side chains of 11 to 14 carbons in length). This chain is Acyl-homoserine lactone acylase PvdQ (pvdQ), found in Pseudomonas syringae pv. tomato (strain ATCC BAA-871 / DC3000).